Here is a 171-residue protein sequence, read N- to C-terminus: Probable chorismate pyruvate-lyase (171 aa).

Substrate is bound by residues M36, R78, L116, and E157.

The protein belongs to the UbiC family.

The protein resides in the cytoplasm. It carries out the reaction chorismate = 4-hydroxybenzoate + pyruvate. It participates in cofactor biosynthesis; ubiquinone biosynthesis. Removes the pyruvyl group from chorismate, with concomitant aromatization of the ring, to provide 4-hydroxybenzoate (4HB) for the ubiquinone pathway. This Bartonella henselae (strain ATCC 49882 / DSM 28221 / CCUG 30454 / Houston 1) (Rochalimaea henselae) protein is Probable chorismate pyruvate-lyase.